The primary structure comprises 430 residues: Glutamate-1-semialdehyde 2,1-aminomutase (430 aa).

Position 266 is an N6-(pyridoxal phosphate)lysine (K266).

This sequence belongs to the class-III pyridoxal-phosphate-dependent aminotransferase family. HemL subfamily. As to quaternary structure, homodimer. Requires pyridoxal 5'-phosphate as cofactor.

It is found in the cytoplasm. The catalysed reaction is (S)-4-amino-5-oxopentanoate = 5-aminolevulinate. The protein operates within porphyrin-containing compound metabolism; protoporphyrin-IX biosynthesis; 5-aminolevulinate from L-glutamyl-tRNA(Glu): step 2/2. This chain is Glutamate-1-semialdehyde 2,1-aminomutase, found in Acidithiobacillus ferrooxidans (strain ATCC 23270 / DSM 14882 / CIP 104768 / NCIMB 8455) (Ferrobacillus ferrooxidans (strain ATCC 23270)).